Consider the following 365-residue polypeptide: Anhydro-N-acetylmuramic acid kinase (365 aa).

9-16 (GTSLDGVD) is a binding site for ATP.

It belongs to the anhydro-N-acetylmuramic acid kinase family.

It catalyses the reaction 1,6-anhydro-N-acetyl-beta-muramate + ATP + H2O = N-acetyl-D-muramate 6-phosphate + ADP + H(+). The protein operates within amino-sugar metabolism; 1,6-anhydro-N-acetylmuramate degradation. Its pathway is cell wall biogenesis; peptidoglycan recycling. Functionally, catalyzes the specific phosphorylation of 1,6-anhydro-N-acetylmuramic acid (anhMurNAc) with the simultaneous cleavage of the 1,6-anhydro ring, generating MurNAc-6-P. Is required for the utilization of anhMurNAc either imported from the medium or derived from its own cell wall murein, and thus plays a role in cell wall recycling. The chain is Anhydro-N-acetylmuramic acid kinase from Zymomonas mobilis subsp. mobilis (strain ATCC 31821 / ZM4 / CP4).